Consider the following 213-residue polypeptide: Nucleolar protein 12 (213 aa).

A coiled-coil region spans residues 32 to 95; the sequence is GFHKRKVERK…RLVTAKTESV (64 aa). The segment at 117-213 is disordered; the sequence is ARLLGLPTPE…LTGKARHSGE (97 aa). Basic residues-rich tracts occupy residues 169–181 and 197–213; these read AHSR…KRLR and SKTR…HSGE.

Belongs to the RRP17 family. In terms of assembly, interacts with KIAA1191.

It is found in the nucleus. It localises to the nucleolus. The protein localises to the cytoplasm. Multifunctional RNA binding protein that plays a role in RNA metabolism and DNA maintenance. Participates in the resolution of DNA stress and the maintenance of genome integrity by localizing to sites of DNA insults. Also plays a role in proper nucleolar organization by limiting nucleolar size and regulating nucleolar number. Mechanistically, regulates the nucleolar levels of fibrillarin and nucleolin, two key players in pre-rRNA processing and ribosome assembly. The polypeptide is Nucleolar protein 12 (NOL12) (Bos taurus (Bovine)).